Reading from the N-terminus, the 201-residue chain is MLNAKIGKVGKVLVCGMKGVGKTALIEQLVYGHVNPETELHPTIEDIYVASVDTGRGGARETLRIYDTAGLQGEQQQLPRHYLQFPDAFVLVYDPMDPRSLDMLADIKADIEKHKEKKEIPVVVLANVRARAAPNPVEKVMDRANIWCQRERIKHYTVNAMERPSLYEPFTTLCARLHPMQTKSTFPQLRQVMQNRQKSEA.

The small GTPase-like stretch occupies residues 3-201 (NAKIGKVGKV…VMQNRQKSEA (199 aa)). 16–23 (GMKGVGKT) is a GTP binding site. The Effector region motif lies at 40-48 (LHPTIEDIY). GTP is bound by residues 67 to 71 (DTAGL) and 127 to 130 (NVRA).

It belongs to the small GTPase superfamily. Ras family. KappaB-Ras subfamily. Interacts with NF-kappa-B inhibitor cactus.

Functionally, atypical Ras-like protein that may act as a regulator of NF-kappa-B activity, possibly by preventing the degradation of NF-kappa-B inhibitor cactus. The protein is NF-kappa-B inhibitor-interacting Ras-like protein (kappaB-Ras) of Drosophila melanogaster (Fruit fly).